The sequence spans 221 residues: High frequency lysogenization protein HflD homolog (221 aa).

The protein belongs to the HflD family.

It is found in the cytoplasm. The protein localises to the cell inner membrane. This Acidithiobacillus ferrooxidans (strain ATCC 23270 / DSM 14882 / CIP 104768 / NCIMB 8455) (Ferrobacillus ferrooxidans (strain ATCC 23270)) protein is High frequency lysogenization protein HflD homolog.